Here is a 382-residue protein sequence, read N- to C-terminus: Serine/threonine-protein kinase US3 homolog (382 aa).

The segment covering 1–10 (MENKQCDHLT) has biased composition (basic and acidic residues). The segment at 1 to 75 (MENKQCDHLT…ASESDEDDDD (75 aa)) is disordered. Residues 12 to 24 (WFSTTSDASESMD) are compositionally biased toward polar residues. Residues 45–75 (ADEDLYSDISEGDLEYSDCDSASESDEDDDD) are compositionally biased toward acidic residues. The region spanning 93-379 (YTVIKTLTPG…AEELLSYPMF (287 aa)) is the Protein kinase domain. ATP is bound by residues 99–107 (LTPGSEGRV) and lysine 122. Aspartate 207 functions as the Proton acceptor in the catalytic mechanism.

Belongs to the protein kinase superfamily. Ser/Thr protein kinase family. Phosphorylated by protein 49; this phosphorylation regulates subsequent phosphorylation of proteins 26 and 29 by US3 homolog. Autophosphorylated.

The protein resides in the host cytoplasm. It is found in the host nucleus. The catalysed reaction is L-seryl-[protein] + ATP = O-phospho-L-seryl-[protein] + ADP + H(+). It carries out the reaction L-threonyl-[protein] + ATP = O-phospho-L-threonyl-[protein] + ADP + H(+). Multifunctional serine/threonine kinase that plays a role in several processes including egress of virus particles from the nucleus, modulation of the actin cytoskeleton and inhibition of apoptosis. Phosphorylates protein 26 and 29, two critical regulators of capsid budding from nucleus to endoplasmic reticulum, thereby facilitating virion egress. Modulates and redistributes host components of the nuclear envelope, including LMNA, emerin/EMD and the nuclear matrix protein MATR3. Phosphorylates envelope glycoprotein B (gB), probably to direct it to the cell surface. Promotes virus intracellular spread by restructuring host cell cytoskeleton. Blocks host apoptosis to extend cell survival and allow efficient viral replication. Promotes viral gene expression by phosphorylating host HDAC2 to reduce viral genome silencing. The protein is Serine/threonine-protein kinase US3 homolog of Equine herpesvirus 1 (strain Ab4p) (EHV-1).